The following is a 336-amino-acid chain: Dihydroorotate dehydrogenase (quinone) (336 aa).

Residues Ala-62 to Lys-66 and Thr-86 each bind FMN. Lys-66 contributes to the substrate binding site. Substrate is bound at residue Asn-111 to Phe-115. Asn-139 and Asn-172 together coordinate FMN. Asn-172 is a binding site for substrate. Ser-175 serves as the catalytic Nucleophile. Asn-177 is a substrate binding site. Residues Lys-217 and Thr-245 each coordinate FMN. Asn-246–Thr-247 serves as a coordination point for substrate. FMN-binding positions include Gly-268, Gly-297, and Tyr-318–Ser-319.

Belongs to the dihydroorotate dehydrogenase family. Type 2 subfamily. In terms of assembly, monomer. It depends on FMN as a cofactor.

It localises to the cell membrane. It carries out the reaction (S)-dihydroorotate + a quinone = orotate + a quinol. Its pathway is pyrimidine metabolism; UMP biosynthesis via de novo pathway; orotate from (S)-dihydroorotate (quinone route): step 1/1. Its function is as follows. Catalyzes the conversion of dihydroorotate to orotate with quinone as electron acceptor. In Escherichia coli (strain SE11), this protein is Dihydroorotate dehydrogenase (quinone).